Reading from the N-terminus, the 482-residue chain is Adenylyltransferase and sulfurtransferase uba4 (482 aa).

ATP is bound by residues glycine 93, aspartate 114, 121–125, lysine 138, and 182–183; these read SNLHR and DN. Zn(2+)-binding residues include cysteine 231 and cysteine 234. Residue cysteine 248 is the Glycyl thioester intermediate; for adenylyltransferase activity of the active site. Residues cysteine 309 and cysteine 312 each coordinate Zn(2+). The Rhodanese domain occupies 362–480; sequence EEKEPTIIDV…WKEQVDPEWP (119 aa). The active-site Cysteine persulfide intermediate; for sulfurtransferase activity is the cysteine 435.

The protein in the N-terminal section; belongs to the HesA/MoeB/ThiF family. UBA4 subfamily. Zn(2+) serves as cofactor.

It is found in the cytoplasm. It localises to the cytosol. The enzyme catalyses [molybdopterin-synthase sulfur-carrier protein]-C-terminal Gly-Gly + ATP + H(+) = [molybdopterin-synthase sulfur-carrier protein]-C-terminal Gly-Gly-AMP + diphosphate. The catalysed reaction is [molybdopterin-synthase sulfur-carrier protein]-C-terminal Gly-Gly-AMP + S-sulfanyl-L-cysteinyl-[cysteine desulfurase] + AH2 = [molybdopterin-synthase sulfur-carrier protein]-C-terminal-Gly-aminoethanethioate + L-cysteinyl-[cysteine desulfurase] + A + AMP + 2 H(+). The protein operates within tRNA modification; 5-methoxycarbonylmethyl-2-thiouridine-tRNA biosynthesis. Its pathway is cofactor biosynthesis; molybdopterin biosynthesis. Plays a central role in 2-thiolation of mcm(5)S(2)U at tRNA wobble positions of cytosolic tRNA(Lys), tRNA(Glu) and tRNA(Gln). Also essential during biosynthesis of the molybdenum cofactor. Acts by mediating the C-terminal thiocarboxylation of sulfur carriers urm1 and mocs2a. Its N-terminus first activates urm1 and mocs2a as acyl-adenylates (-COAMP), then the persulfide sulfur on the catalytic cysteine is transferred to urm1 and mocs2a to form thiocarboxylation (-COSH) of their C-terminus. The reaction probably involves hydrogen sulfide that is generated from the persulfide intermediate and that acts as a nucleophile towards urm1 and mocs2a. Subsequently, a transient disulfide bond is formed. Does not use thiosulfate as sulfur donor; nfs1 probably acting as a sulfur donor for thiocarboxylation reactions. The sequence is that of Adenylyltransferase and sulfurtransferase uba4 from Aspergillus niger (strain ATCC MYA-4892 / CBS 513.88 / FGSC A1513).